The sequence spans 419 residues: Heparan-sulfate 6-O-sulfotransferase 3-B (419 aa).

The Cytoplasmic segment spans residues 1 to 7 (MNDKPNK). The chain crosses the membrane as a helical; Signal-anchor for type II membrane protein span at residues 8–28 (WIFIPILAILFVMIGYQYVCP). The Lumenal portion of the chain corresponds to 29-419 (AGGQACHFRT…EDYASQVVRW (391 aa)). N-linked (GlcNAc...) asparagine glycosylation is present at Asn-77. 101 to 109 (HIQKTGGTT) provides a ligand contact to 3'-phosphoadenylyl sulfate. Substrate contacts are provided by residues 131–132 (KK), Arg-148, Trp-153, and His-158. His-158 acts as the Proton acceptor in catalysis. 3'-phosphoadenylyl sulfate-binding residues include Arg-191 and Ser-199. 2 residues coordinate substrate: His-203 and Trp-210. Residues Asn-270 and Asn-275 are each glycosylated (N-linked (GlcNAc...) asparagine). 323-325 (TQI) serves as a coordination point for 3'-phosphoadenylyl sulfate. N-linked (GlcNAc...) asparagine glycosylation occurs at Asn-326. Residue 329 to 330 (RA) participates in 3'-phosphoadenylyl sulfate binding. 2 N-linked (GlcNAc...) asparagine glycosylation sites follow: Asn-393 and Asn-402.

Belongs to the sulfotransferase 6 family. In terms of tissue distribution, in early somitogenesis, expressed in presumptive forebrain and midbrain, tail bud and Kupffer's vesicle. During mid-somitogenesis, ubiquitous expression which is strongest in the somites and eye. During late somitogenesis, predominantly expressed in eye, hindbrain and ventral somites. At 24 hours post-fertilization (hpf), restricted to lens and neural retina, brain, otic vesicle and somites. At 36 hpf, brain expression is restricted to telencephalon. At 48 hpf, restricted to telencephalon and pectoral fin.

The protein resides in the membrane. The enzyme catalyses alpha-D-glucosaminyl-[heparan sulfate](n) + 3'-phosphoadenylyl sulfate = 6-sulfo-alpha-D-glucosaminyl-[heparan sulfate](n) + adenosine 3',5'-bisphosphate + H(+). In terms of biological role, 6-O-sulfation enzyme which catalyzes the transfer of sulfate from 3'-phosphoadenosine 5'-phosphosulfate (PAPS) to position 6 of the N-sulfoglucosamine residue (GlcNS) of heparan sulfate. This Danio rerio (Zebrafish) protein is Heparan-sulfate 6-O-sulfotransferase 3-B.